We begin with the raw amino-acid sequence, 49 residues long: Small ribosomal subunit protein uS19c (49 aa).

It belongs to the universal ribosomal protein uS19 family.

The protein localises to the plastid. It localises to the chloroplast. Its function is as follows. Protein S19 forms a complex with S13 that binds strongly to the 16S ribosomal RNA. This chain is Small ribosomal subunit protein uS19c (rps19), found in Sinapis alba (White mustard).